The primary structure comprises 407 residues: Imidazolonepropionase (407 aa).

2 residues coordinate Fe(3+): H74 and H76. H74 and H76 together coordinate Zn(2+). The 4-imidazolone-5-propanoate site is built by R83, Y146, and H179. N-formimidoyl-L-glutamate is bound at residue Y146. H244 lines the Fe(3+) pocket. Residue H244 coordinates Zn(2+). Q247 contributes to the 4-imidazolone-5-propanoate binding site. D319 lines the Fe(3+) pocket. D319 contributes to the Zn(2+) binding site. Residues N321 and G323 each contribute to the N-formimidoyl-L-glutamate site. T324 is a binding site for 4-imidazolone-5-propanoate.

This sequence belongs to the metallo-dependent hydrolases superfamily. HutI family. It depends on Zn(2+) as a cofactor. Fe(3+) is required as a cofactor.

It is found in the cytoplasm. It carries out the reaction 4-imidazolone-5-propanoate + H2O = N-formimidoyl-L-glutamate. Its pathway is amino-acid degradation; L-histidine degradation into L-glutamate; N-formimidoyl-L-glutamate from L-histidine: step 3/3. In terms of biological role, catalyzes the hydrolytic cleavage of the carbon-nitrogen bond in imidazolone-5-propanoate to yield N-formimidoyl-L-glutamate. It is the third step in the universal histidine degradation pathway. In Salmonella typhi, this protein is Imidazolonepropionase.